The chain runs to 130 residues: Small ribosomal subunit protein uS11 (130 aa).

The protein belongs to the universal ribosomal protein uS11 family. Part of the 30S ribosomal subunit. Interacts with proteins S7 and S18. Binds to IF-3.

Located on the platform of the 30S subunit, it bridges several disparate RNA helices of the 16S rRNA. Forms part of the Shine-Dalgarno cleft in the 70S ribosome. In Acholeplasma laidlawii (strain PG-8A), this protein is Small ribosomal subunit protein uS11.